The following is a 40-amino-acid chain: Alpha-conotoxin-like Qc1.4b (40 aa).

The propeptide occupies 1–19; that stretch reads SDGRNTAANDKASDLMALR. 2 disulfides stabilise this stretch: Cys22/Cys28 and Cys23/Cys36. Positions 24 to 26 are lacks the Ser-Xaa-Pro motif that is crucial for potent interaction with nAChR; the sequence is PNP. The residue at position 36 (Cys36) is a Cysteine amide. A propeptide spanning residues 37–40 is cleaved from the precursor; sequence GGGR.

This sequence belongs to the conotoxin A superfamily. In terms of tissue distribution, expressed by the venom duct.

The protein localises to the secreted. Its function is as follows. Alpha-conotoxins act on postsynaptic membranes, they bind to the nicotinic acetylcholine receptors (nAChR) and thus inhibit them. Has possibly a distinct nAChR binding mode from other alpha-conotoxins, due to a different three residue motif (lacks the Ser-Xaa-Pro motif). This chain is Alpha-conotoxin-like Qc1.4b, found in Conus quercinus (Oak cone).